The following is a 150-amino-acid chain: FCS-Like Zinc finger 15 (150 aa).

A compositionally biased stretch (low complexity) spans Asn-12–Asn-28. A disordered region spans residues Asn-12–Ser-31. Residues Gly-67–Ser-111 form an FLZ-type zinc finger. The tract at residues Ser-129 to Tyr-150 is disordered.

Belongs to the FLZ family. As to quaternary structure, interacts with KIN10 and KIN11 via its FLZ-type zinc finger domain. Interacts with KINB1 and KINB3 via its N-terminal part. Forms homodimer and heterodimer with FLZ1, FLZ2 and FLZ7 in vitro.

The protein localises to the cytoplasm. Its subcellular location is the P-body. Functionally, may act as an adapter to facilitate the interaction of SnRK1 complex with effector proteins, conferring tissue- and stimulus-type specific differences in the SnRK1 regulation pathway. The sequence is that of FCS-Like Zinc finger 15 from Arabidopsis thaliana (Mouse-ear cress).